The primary structure comprises 127 residues: Protein translocase subunit SecE (127 aa).

3 consecutive transmembrane segments (helical) span residues 16-36, 42-62, and 98-118; these read IAKW…NHYY, IFQN…IFLT, and IIVT…LIWF.

Belongs to the SecE/SEC61-gamma family. Component of the Sec protein translocase complex. Heterotrimer consisting of SecY, SecE and SecG subunits. The heterotrimers can form oligomers, although 1 heterotrimer is thought to be able to translocate proteins. Interacts with the ribosome. Interacts with SecDF, and other proteins may be involved. Interacts with SecA.

The protein resides in the cell membrane. Functionally, essential subunit of the Sec protein translocation channel SecYEG. Clamps together the 2 halves of SecY. May contact the channel plug during translocation. This chain is Protein translocase subunit SecE, found in Buchnera aphidicola subsp. Baizongia pistaciae (strain Bp).